Reading from the N-terminus, the 299-residue chain is Oxygen-dependent coproporphyrinogen-III oxidase (299 aa).

Ser92 contacts substrate. Residues His96 and His106 each contribute to the a divalent metal cation site. His106 serves as the catalytic Proton donor. 108–110 (NVR) provides a ligand contact to substrate. A divalent metal cation is bound by residues His145 and His175. Positions 239 to 274 (YVEFNLVYDRGTLFGLQSGGRAESILMSLPPQVRWE) are important for dimerization. Residue 257-259 (GGR) coordinates substrate.

Belongs to the aerobic coproporphyrinogen-III oxidase family. As to quaternary structure, homodimer. A divalent metal cation serves as cofactor.

The protein resides in the cytoplasm. It carries out the reaction coproporphyrinogen III + O2 + 2 H(+) = protoporphyrinogen IX + 2 CO2 + 2 H2O. It participates in porphyrin-containing compound metabolism; protoporphyrin-IX biosynthesis; protoporphyrinogen-IX from coproporphyrinogen-III (O2 route): step 1/1. Functionally, involved in the heme biosynthesis. Catalyzes the aerobic oxidative decarboxylation of propionate groups of rings A and B of coproporphyrinogen-III to yield the vinyl groups in protoporphyrinogen-IX. The chain is Oxygen-dependent coproporphyrinogen-III oxidase from Xanthomonas campestris pv. campestris (strain 8004).